The following is a 789-amino-acid chain: Aconitate hydratase, mitochondrial (789 aa).

The transit peptide at 1-32 directs the protein to the mitochondrion; sequence MFCKISRAPARMGSRIFTQSTLRSFSCAPVAA. Substrate contacts are provided by residues glutamine 106 and 199–201; that span reads DSH. [4Fe-4S] cluster-binding residues include cysteine 392, cysteine 455, and cysteine 458. Residues arginine 481, arginine 486, arginine 613, and 676–677 each bind substrate; that span reads SR.

It belongs to the aconitase/IPM isomerase family. Monomer. [4Fe-4S] cluster is required as a cofactor.

Its subcellular location is the mitochondrion. The catalysed reaction is citrate = D-threo-isocitrate. The protein operates within carbohydrate metabolism; tricarboxylic acid cycle; isocitrate from oxaloacetate: step 2/2. In terms of biological role, catalyzes the isomerization of citrate to isocitrate via cis-aconitate, a step in the citric acid cycle. The sequence is that of Aconitate hydratase, mitochondrial from Schizosaccharomyces pombe (strain 972 / ATCC 24843) (Fission yeast).